We begin with the raw amino-acid sequence, 244 residues long: 14-3-3 protein beta/alpha-B (244 aa).

N-acetylmethionine is present on methionine 1.

Belongs to the 14-3-3 family. Homodimer, and heterodimer with other family members.

The protein localises to the cytoplasm. Adapter protein implicated in the regulation of a large spectrum of both general and specialized signaling pathways. Binds to a large number of partners, usually by recognition of a phosphoserine or phosphothreonine motif. Binding generally results in the modulation of the activity of the binding partner. This is 14-3-3 protein beta/alpha-B (ywhab-b) from Xenopus laevis (African clawed frog).